The primary structure comprises 201 residues: Ran-specific GTPase-activating protein 1 (201 aa).

Basic and acidic residues-rich tracts occupy residues 1–17 and 32–66; these read MSSE…EEAA and KKAE…IHFE. The disordered stretch occupies residues 1–66; the sequence is MSSEDKKPVV…APESPDIHFE (66 aa). Residue Ser60 is modified to Phosphoserine. The 137-residue stretch at 64–200 folds into the RanBD1 domain; the sequence is HFEPVVHLEK…FEKAQEINKK (137 aa).

It belongs to the RANBP1 family. As to quaternary structure, interacts with GSP1 and PRP20.

It is found in the cytoplasm. Its subcellular location is the nucleus. In terms of biological role, important for the export of protein containing nuclear export signal (NES) out of the nucleus. Stimulates the GTPase activity of GSP1 and GSP2. In Saccharomyces cerevisiae (strain ATCC 204508 / S288c) (Baker's yeast), this protein is Ran-specific GTPase-activating protein 1 (YRB1).